Reading from the N-terminus, the 221-residue chain is Phosphatidylserine decarboxylase proenzyme (221 aa).

Ser-189 acts as the Schiff-base intermediate with substrate; via pyruvic acid in catalysis. Position 189 is a pyruvic acid (Ser); by autocatalysis (Ser-189).

The protein belongs to the phosphatidylserine decarboxylase family. PSD-A subfamily. As to quaternary structure, heterodimer of a large membrane-associated beta subunit and a small pyruvoyl-containing alpha subunit. Pyruvate is required as a cofactor. Is synthesized initially as an inactive proenzyme. Formation of the active enzyme involves a self-maturation process in which the active site pyruvoyl group is generated from an internal serine residue via an autocatalytic post-translational modification. Two non-identical subunits are generated from the proenzyme in this reaction, and the pyruvate is formed at the N-terminus of the alpha chain, which is derived from the carboxyl end of the proenzyme. The post-translation cleavage follows an unusual pathway, termed non-hydrolytic serinolysis, in which the side chain hydroxyl group of the serine supplies its oxygen atom to form the C-terminus of the beta chain, while the remainder of the serine residue undergoes an oxidative deamination to produce ammonia and the pyruvoyl prosthetic group on the alpha chain.

It is found in the cell membrane. The catalysed reaction is a 1,2-diacyl-sn-glycero-3-phospho-L-serine + H(+) = a 1,2-diacyl-sn-glycero-3-phosphoethanolamine + CO2. It functions in the pathway phospholipid metabolism; phosphatidylethanolamine biosynthesis; phosphatidylethanolamine from CDP-diacylglycerol: step 2/2. Its function is as follows. Catalyzes the formation of phosphatidylethanolamine (PtdEtn) from phosphatidylserine (PtdSer). The protein is Phosphatidylserine decarboxylase proenzyme of Porphyromonas gingivalis (strain ATCC 33277 / DSM 20709 / CIP 103683 / JCM 12257 / NCTC 11834 / 2561).